The primary structure comprises 362 residues: G-protein coupled receptor 6 (362 aa).

The Extracellular portion of the chain corresponds to M1–P74. N2, N9, and N51 each carry an N-linked (GlcNAc...) asparagine glycan. Residues W75–V94 form a helical membrane-spanning segment. The Cytoplasmic portion of the chain corresponds to A95–P106. A helical membrane pass occupies residues M107–V130. At F131–L142 the chain is on the extracellular side. Residues L143 to V164 form a helical membrane-spanning segment. At D165–V185 the chain is on the cytoplasmic side. A helical membrane pass occupies residues H186–L205. Over G206–L230 the chain is Extracellular. The chain crosses the membrane as a helical span at residues S231–C249. Topologically, residues Q250–G277 are cytoplasmic. A helical transmembrane segment spans residues V278–H304. The Extracellular segment spans residues E305–V309. A helical membrane pass occupies residues Y310 to F331. At R332–V362 the chain is on the cytoplasmic side. C345 carries S-palmitoyl cysteine lipidation. Phosphoserine is present on residues S356, S358, and S360.

Belongs to the G-protein coupled receptor 1 family.

The protein resides in the cell membrane. In terms of biological role, orphan receptor with constitutive G(s) signaling activity that activate cyclic AMP. Promotes neurite outgrowth and blocks myelin inhibition in neurons. This is G-protein coupled receptor 6 (GPR6) from Homo sapiens (Human).